Reading from the N-terminus, the 116-residue chain is UPF0134 protein MPN_038 (116 aa).

It belongs to the UPF0134 family.

The sequence is that of UPF0134 protein MPN_038 from Mycoplasma pneumoniae (strain ATCC 29342 / M129 / Subtype 1) (Mycoplasmoides pneumoniae).